A 606-amino-acid chain; its full sequence is Transmembrane 9 superfamily member 1 (606 aa).

The signal sequence occupies residues 1–27 (MTVLGHPRSWSCRWWPLLLLLLLTGRE). N-linked (GlcNAc...) asparagine glycosylation is present at Asn-178. 4 helical membrane passes run 237-257 (LSII…AVIL), 310-330 (VLGV…MALL), 339-359 (GAIN…SGYV), and 373-393 (VWNI…TWSV). Residue Asn-401 is glycosylated (N-linked (GlcNAc...) asparagine). The next 4 helical transmembrane spans lie at 412 to 432 (ILLL…IGGI), 469 to 489 (VGGF…FATV), 499 to 519 (GILF…SIAL), and 535 to 555 (SVLS…FYYA). Asn-559 carries N-linked (GlcNAc...) asparagine glycosylation. The chain crosses the membrane as a helical span at residues 570 to 590 (FGYSLLTGYVFFLMLGTISFF).

The protein belongs to the nonaspanin (TM9SF) (TC 9.A.2) family.

The protein localises to the lysosome membrane. The protein resides in the cytoplasmic vesicle. It is found in the autophagosome membrane. Its function is as follows. Plays an essential role in autophagy. This chain is Transmembrane 9 superfamily member 1 (TM9SF1), found in Bos taurus (Bovine).